Here is a 390-residue protein sequence, read N- to C-terminus: MSDATPFRPPSEAEEALIKETRLPLTGWQQEVDQGLTYGLEAAASIKDRSIPTFSRGELPHYAGINTFMKAPYLEDVREVGKYDVAIVGVPHDSGTTYRPGTRFGPQGIRRISALYTPYNFEMGVDLREQISLCDVGDIFTIPANNEKSFDQISKGIAHIFSSGAFPIILGGDHSIGFPTVRGICRHLGDKKVGIIHFDRHVDTQETDLDERMHTCPWFHATNMANAPAKNLVQLGIGGWQVPRQGVKVCRERATNILTVTDITEMSLDAAADFAIARATDGTDCVWISFDIDCIDAGFVPGTGWPEPGGLLPREALYLLKRIIRETNVCGMEVVEVSPPYDISDMTSLMATRVICDTMAHLVVSGQLPRTEKPAYIHAEANMAVDEPWQ.

Ni(2+)-binding residues include His-174, Asp-199, His-201, Asp-203, Asp-291, and Asp-293.

This sequence belongs to the arginase family. As to quaternary structure, homohexamer. Ni(2+) is required as a cofactor.

The protein resides in the cytoplasm. It carries out the reaction guanidine + H2O = urea + NH4(+). Its activity is regulated as follows. Activation of GdmH depends on the presence of the accessory proteins GhaA (Sll1078) and GhaB (Sll1079), which load nickel into the active site. Hydrolase activity is slightly activated in the presence of GTP. It does not require ATP or NAD(P)H. Addition of Ca(2+), Mn(2+), Fe(2+) or Fe(3+) has no consistent effects, whereas addition of Co(2+), Cu(2+) or Zn(2+) inhibits the activity. Functionally, catalyzes the hydrolysis of guanidine into urea and ammonium. Is highly specific for free guanidine. At pH 8, also catalyzes the release of urea from methylguanidine but with significantly reduced specific activity compared with that for guanidine. Cannot hydrolyze guanidinoacetate, guanidinopropionate, guanidinobutyrate, agmatine, arginine or creatine. Required to use guanidine as the sole nitrogen source for growth. Overexpression of the gene accelerates guanidine degradation and promotes biomass growth. The polypeptide is Guanidine hydrolase (Synechocystis sp. (strain ATCC 27184 / PCC 6803 / Kazusa)).